A 154-amino-acid polypeptide reads, in one-letter code: SsrA-binding protein (154 aa).

It belongs to the SmpB family.

Its subcellular location is the cytoplasm. In terms of biological role, required for rescue of stalled ribosomes mediated by trans-translation. Binds to transfer-messenger RNA (tmRNA), required for stable association of tmRNA with ribosomes. tmRNA and SmpB together mimic tRNA shape, replacing the anticodon stem-loop with SmpB. tmRNA is encoded by the ssrA gene; the 2 termini fold to resemble tRNA(Ala) and it encodes a 'tag peptide', a short internal open reading frame. During trans-translation Ala-aminoacylated tmRNA acts like a tRNA, entering the A-site of stalled ribosomes, displacing the stalled mRNA. The ribosome then switches to translate the ORF on the tmRNA; the nascent peptide is terminated with the 'tag peptide' encoded by the tmRNA and targeted for degradation. The ribosome is freed to recommence translation, which seems to be the essential function of trans-translation. This Acetivibrio thermocellus (strain ATCC 27405 / DSM 1237 / JCM 9322 / NBRC 103400 / NCIMB 10682 / NRRL B-4536 / VPI 7372) (Clostridium thermocellum) protein is SsrA-binding protein.